The chain runs to 1275 residues: Inner capsid protein lambda-1 (1275 aa).

The segment covering 1 to 12 (MKRIPRKTRGKS) has biased composition (basic residues). The interval 1–147 (MKRIPRKTRG…NVDNEGGDNQ (147 aa)) is disordered. Basic and acidic residues predominate over residues 18 to 35 (DSTERADDGSAQLRDKQS). Positions 55 to 66 (TRPSLQTVQKAT) are enriched in polar residues. Basic and acidic residues-rich tracts occupy residues 80-98 (AVDK…HVEA) and 105-117 (ATKR…DKQK). Residues 118-139 (AQVTYNDTGINNANELSRSGNV) show a composition bias toward polar residues. The C2H2-type zinc-finger motif lies at 181–203 (YQCHVCSAVLFSPLDLDAHVASH).

The protein belongs to the turreted BTV-fold inner capsid family. As to quaternary structure, homodecamer; each decamer is made up of two conformers of VP2, called VP2A and VP2B. 12 homodecamers assemble to form an icosahedral capsid. Interacts with protein mu-NS; in viral inclusions. The cofactor is Mg(2+). It depends on Mn(2+) as a cofactor.

It is found in the virion. It carries out the reaction ATP + H2O = ADP + phosphate + H(+). In terms of biological role, inner capsid protein that self-assembles to form an icosahedral capsid with a T=2 symmetry, which consists of 120 copies of VP2, with channels at each of its five-fold vertices. This capsid constitutes the innermost concentric layer of the viral mature particle. Its function is as follows. Displays NTPase, RNA 5'-triphosphatase (RTPase) and RNA helicase activities and probably participates in transcription of the viral genome. Helicase activity might be involved in unwinding or reannealing dsRNA during RNA synthesis. RTPase enzymatic activity represents the first step in RNA capping, which yields a 5'-diphosphorylated plus-strand RNA. In Reovirus type 2 (strain D5/Jones) (T2J), this protein is Inner capsid protein lambda-1.